Consider the following 209-residue polypeptide: Type III pantothenate kinase (209 aa).

5-12 (DIGNSNAN) is an ATP binding site. Substrate-binding positions include Y68 and 72–75 (GIDR). Catalysis depends on D74, which acts as the Proton acceptor. Residue D89 participates in K(+) binding. Position 92 (S92) interacts with ATP. T144 contacts substrate.

This sequence belongs to the type III pantothenate kinase family. Homodimer. Requires NH4(+) as cofactor. The cofactor is K(+).

It localises to the cytoplasm. The enzyme catalyses (R)-pantothenate + ATP = (R)-4'-phosphopantothenate + ADP + H(+). It functions in the pathway cofactor biosynthesis; coenzyme A biosynthesis; CoA from (R)-pantothenate: step 1/5. Functionally, catalyzes the phosphorylation of pantothenate (Pan), the first step in CoA biosynthesis. This is Type III pantothenate kinase from Campylobacter jejuni (strain RM1221).